A 147-amino-acid polypeptide reads, in one-letter code: Hemoglobin subunit beta-H0 (147 aa).

In terms of domain architecture, Globin spans 3-147; the sequence is HFTAEEKAAI…VATALSHKYH (145 aa). Positions 64 and 93 each coordinate heme b.

Belongs to the globin family. As to quaternary structure, heterotetramer of two alpha chains and two beta chains. As to expression, red blood cells.

Functionally, this is a minor early embryonic beta chain. The chain is Hemoglobin subunit beta-H0 (Hbb-bh0) from Mus musculus (Mouse).